Consider the following 867-residue polypeptide: Pentatricopeptide repeat-containing protein At2g39230, mitochondrial (867 aa).

A mitochondrion-targeting transit peptide spans 1–49 (MTTFMVSKRFRPPIFLHRFINPKPISSQTRFLHPPDNQSRDISDSTTET). The segment at 27 to 74 (SQTRFLHPPDNQSRDISDSTTETISTLEFPHKTSVPNHSPLTSTSETE) is disordered. Polar residues predominate over residues 60-72 (SVPNHSPLTSTSE). 19 PPR repeats span residues 168-202 (TPRA…KVVP), 203-237 (FVPY…GVAG), 238-272 (DNVT…GAEP), 273-307 (DGLL…LGVP), 309-343 (SQET…GIPM), 344-378 (SVIA…GLAP), 379-413 (DKVM…RIAP), 414-444 (SSVL…SFES), 448-482 (HGFM…GIEP), 483-517 (NVVF…GLEP), 518-552 (NNFT…NFEA), 553-588 (NEVI…RYSM), 589-623 (SCTS…GKSP), 624-658 (NVVT…ELKL), 659-693 (DLPA…GLMP), 694-728 (NVSV…GISC), 729-763 (DLFT…GIVP), 764-798 (DEIL…DVTP), and 799-833 (NVLL…GIVH).

The protein belongs to the PPR family. P subfamily. In terms of tissue distribution, expressed in lateral organ junctions and shoot apical meristem (SAM).

It localises to the mitochondrion. Functionally, involved in lateral organ development and boundary demarcation. The chain is Pentatricopeptide repeat-containing protein At2g39230, mitochondrial (LOJ) from Arabidopsis thaliana (Mouse-ear cress).